The following is a 1361-amino-acid chain: Cell migration-inducing and hyaluronan-binding protein (1361 aa).

A signal peptide spans Met-1 to Ser-30. In terms of domain architecture, G8 spans Gln-44–Lys-166. Asn-119, Asn-165, Asn-312, Asn-370, and Asn-420 each carry an N-linked (GlcNAc...) asparagine glycan. The GG-type lectin 1 domain occupies Gly-176–Ser-317. The segment at Ala-295 to Thr-591 is necessary for its endoplasmic reticulum (ER) retention and interaction with HSPA5. PbH1 repeat units lie at residues Asp-572–Gly-594, Ser-595–Asp-617, Ile-719–Asn-741, and Gly-798–Ser-819. N-linked (GlcNAc...) asparagine glycosylation is found at Asn-889 and Asn-921. One can recognise a GG-type lectin 2 domain in the interval Asn-1227–Leu-1361.

The protein belongs to the CEMIP family. As to quaternary structure, interacts with EPHA2 and ITPR3. Interacts with HSPA5/BIP; the interaction induces calcium leakage from the endoplasmic reticulum and cell migration. Interacts with clathrin heavy chain/CLTC. N-glycosylated; glycosylation is not necessary for HA-binding. As to expression, expressed in dermal and in synovial fibroblasts. Strongly expressed in gastric cancers compared with the paired normal tissues. Strongly expressed in both ductal carcinoma and invasive breast cancer cells compared with benign epithelial cells (at protein level). Strongly expressed in brain, placenta, prostate, breast, lung and testis. Expressed in fibroblasts, epithelial cells and cancer cells. In ear, it is specifically expressed in inner ear. Expressed in cochlea and vestibule tissues. Strongly expressed in gastric cancers compared with the paired normal tissues. Strongly expressed in colon adenocarcinomas compared with normal colonic mucosas. Strongly expressed in breast cancer as compared to normal breast tissue.

It is found in the nucleus. The protein localises to the cytoplasm. The protein resides in the endoplasmic reticulum. It localises to the cell membrane. Its subcellular location is the membrane. It is found in the clathrin-coated pit. The protein localises to the secreted. The catalysed reaction is Random hydrolysis of (1-&gt;4)-linkages between N-acetyl-beta-D-glucosamine and D-glucuronate residues in hyaluronate.. Its activity is regulated as follows. Activity is up-regulated by histamine. Mediates depolymerization of hyaluronic acid (HA) via the cell membrane-associated clathrin-coated pit endocytic pathway. Binds to hyaluronic acid. Hydrolyzes high molecular weight hyaluronic acid to produce an intermediate-sized product, a process that may occur through rapid vesicle endocytosis and recycling without intracytoplasmic accumulation or digestion in lysosomes. Involved in hyaluronan catabolism in the dermis of the skin and arthritic synovium. Positively regulates epithelial-mesenchymal transition (EMT), and hence tumor cell growth, invasion and cancer dissemination. In collaboration with HSPA5/BIP, promotes cancer cell migration in a calcium and PKC-dependent manner. May be involved in hearing. This Homo sapiens (Human) protein is Cell migration-inducing and hyaluronan-binding protein.